The sequence spans 234 residues: MSRPVRNRKVVDYSQFQESDDADEDYGRDSGPPAKKIRSSPREAKNKRRSGKNSQEDSEDSEEKDVKTKKDDSHSAEDSEDEKDDHKNVRQQRQAASKAASKQREMLLEDVGSEEEPEEDDEAPFQEKDSGSDEDFLMEDDDDSDYGSSKKKNKKMVKKSKPERKEKKMPKPRLKATVTPSPVKGKAKVGRPTASKKSKEKTPSPKEEDEEAESPPEKKSGDEGSEDEASSGED.

Residues 1–234 (MSRPVRNRKV…SEDEASSGED (234 aa)) are disordered. Tyrosine 13 is subject to Phosphotyrosine. Phosphoserine occurs at positions 14 and 19. A Phosphotyrosine modification is found at tyrosine 26. A compositionally biased stretch (basic residues) spans 35 to 51 (KKIRSSPREAKNKRRSG). 6 positions are modified to phosphoserine: serine 54, serine 58, serine 61, serine 73, serine 75, and serine 79. Residues 64–77 (KDVKTKKDDSHSAE) are compositionally biased toward basic and acidic residues. Low complexity predominate over residues 91–100 (QQRQAASKAA). The span at 111–124 (VGSEEEPEEDDEAP) shows a compositional bias: acidic residues. Serine 113, serine 130, serine 132, and serine 144 each carry phosphoserine. Residues 132–145 (SDEDFLMEDDDDSD) show a composition bias toward acidic residues. A compositionally biased stretch (basic residues) spans 149–174 (SKKKNKKMVKKSKPERKEKKMPKPRL). The residue at position 179 (threonine 179) is a Phosphothreonine. Serine 181 carries the post-translational modification Phosphoserine. Residues 185–199 (GKAKVGRPTASKKSK) show a composition bias toward basic residues. Threonine 202 is subject to Phosphothreonine. A phosphoserine mark is found at serine 204, serine 214, serine 225, and serine 231. Positions 223–234 (EGSEDEASSGED) are enriched in acidic residues.

Does not interact with RAD51. Post-translationally, phosphorylated in an ATM-dependent manner in response to DNA damage. Phosphorylated by CDK1 and casein kinase.

Its subcellular location is the nucleus. The protein localises to the chromosome. Functionally, chromatin-associated protein involved in DNA repair by promoting homologous recombination (HR). Binds double-stranded DNA (dsDNA) and secondary DNA structures, such as D-loop structures, but with less affinity than RAD51AP1. The sequence is that of Nuclear ubiquitous casein and cyclin-dependent kinase substrate 1 (Nucks1) from Mus musculus (Mouse).